A 342-amino-acid chain; its full sequence is 3-isopropylmalate dehydrogenase (342 aa).

Residues Arg-87, Arg-97, Arg-121, and Asp-212 each coordinate substrate. Asp-212, Asp-236, and Asp-240 together coordinate Mg(2+). 272–284 (GSAPDIAGRQLAD) is a binding site for NAD(+). A compositionally biased stretch (low complexity) spans 319 to 328 (RAAAGAAQPS). The interval 319–342 (RAAAGAAQPSTRERGEDLAARAAG) is disordered. A compositionally biased stretch (basic and acidic residues) spans 329–342 (TRERGEDLAARAAG).

This sequence belongs to the isocitrate and isopropylmalate dehydrogenases family. LeuB type 2 subfamily. In terms of assembly, homodimer. Mg(2+) serves as cofactor. The cofactor is Mn(2+).

It is found in the cytoplasm. The enzyme catalyses (2R,3S)-3-isopropylmalate + NAD(+) = 4-methyl-2-oxopentanoate + CO2 + NADH. The protein operates within amino-acid biosynthesis; L-leucine biosynthesis; L-leucine from 3-methyl-2-oxobutanoate: step 3/4. Its function is as follows. Catalyzes the oxidation of 3-carboxy-2-hydroxy-4-methylpentanoate (3-isopropylmalate) to 3-carboxy-4-methyl-2-oxopentanoate. The product decarboxylates to 4-methyl-2 oxopentanoate. The chain is 3-isopropylmalate dehydrogenase from Frankia casuarinae (strain DSM 45818 / CECT 9043 / HFP020203 / CcI3).